Reading from the N-terminus, the 842-residue chain is Alanine--tRNA ligase (842 aa).

Positions 549, 553, 650, and 654 each coordinate Zn(2+).

This sequence belongs to the class-II aminoacyl-tRNA synthetase family. It depends on Zn(2+) as a cofactor.

It is found in the cytoplasm. The enzyme catalyses tRNA(Ala) + L-alanine + ATP = L-alanyl-tRNA(Ala) + AMP + diphosphate. Its function is as follows. Catalyzes the attachment of alanine to tRNA(Ala) in a two-step reaction: alanine is first activated by ATP to form Ala-AMP and then transferred to the acceptor end of tRNA(Ala). Also edits incorrectly charged Ser-tRNA(Ala) and Gly-tRNA(Ala) via its editing domain. This chain is Alanine--tRNA ligase, found in Campylobacter jejuni (strain RM1221).